The primary structure comprises 264 residues: Phosphonoacetaldehyde hydrolase (264 aa).

Catalysis depends on Asp10, which acts as the Nucleophile. Asp10 and Ala12 together coordinate Mg(2+). Lys52 (schiff-base intermediate with substrate) is an active-site residue. Asp185 lines the Mg(2+) pocket.

Belongs to the HAD-like hydrolase superfamily. PhnX family. As to quaternary structure, homodimer. Requires Mg(2+) as cofactor.

The catalysed reaction is phosphonoacetaldehyde + H2O = acetaldehyde + phosphate + H(+). Its function is as follows. Involved in phosphonate degradation. This is Phosphonoacetaldehyde hydrolase from Parabacteroides distasonis (strain ATCC 8503 / DSM 20701 / CIP 104284 / JCM 5825 / NCTC 11152).